We begin with the raw amino-acid sequence, 483 residues long: Trimethylamine methyltransferase MttB (483 aa).

Pyl-334 is a non-standard amino acid (pyrrolysine).

This sequence belongs to the trimethylamine methyltransferase family. As to quaternary structure, can form a complex with MttC.

It catalyses the reaction Co(I)-[trimethylamine-specific corrinoid protein] + trimethylamine + H(+) = methyl-Co(III)-[trimethylamine-specific corrinoid protein] + dimethylamine. It participates in one-carbon metabolism; methanogenesis from trimethylamine. Its function is as follows. Catalyzes the transfer of a methyl group from trimethylamine to the corrinoid cofactor of MttC. In Methanosarcina thermophila, this protein is Trimethylamine methyltransferase MttB (mttB).